We begin with the raw amino-acid sequence, 640 residues long: 2-hydroxyacyl-CoA lyase 2 (640 aa).

A helical membrane pass occupies residues 2–22; that stretch reads VLFLIIAAIIIGLLLWKWLDV. Glutamate 102 contributes to the thiamine diphosphate binding site. Residues 477–557 form a thiamine pyrophosphate binding region; sequence DFVGSAAYIV…VIGIVGNDAC (81 aa). Positions 528 and 554 each coordinate Mg(2+).

The protein belongs to the TPP enzyme family. Mg(2+) serves as cofactor. Requires thiamine diphosphate as cofactor.

The protein resides in the endoplasmic reticulum membrane. It catalyses the reaction 2-hydroxyoctadecanoyl-CoA = heptadecanal + formyl-CoA. The enzyme catalyses (2R)-hydroxyhexadecanoyl-CoA = pentadecanal + formyl-CoA. Endoplasmic reticulum 2-OH acyl-CoA lyase involved in the cleavage (C1 removal) reaction in the fatty acid alpha-oxydation in a thiamine pyrophosphate (TPP)-dependent manner. The chain is 2-hydroxyacyl-CoA lyase 2 from Caenorhabditis elegans.